A 648-amino-acid chain; its full sequence is Macrolide export ATP-binding/permease protein MacB (648 aa).

Residues 5 to 243 enclose the ABC transporter domain; the sequence is LELKDIRRSY…AGGTEPVVNT (239 aa). 41 to 48 contacts ATP; sequence GASGSGKS. 4 consecutive transmembrane segments (helical) span residues 273-293, 523-543, 576-596, and 600-620; these read LLTMLGIIIGIASVVSIVVVG, LFLTLVAVISLVVGGIGVMNI, AVLVCLVGGALGITLSLLIAF, and LFLPGWEIGFSPLALLLAFLC.

The protein belongs to the ABC transporter superfamily. Macrolide exporter (TC 3.A.1.122) family. In terms of assembly, homodimer. Part of the tripartite efflux system MacAB-TolC, which is composed of an inner membrane transporter, MacB, a periplasmic membrane fusion protein, MacA, and an outer membrane component, TolC. The complex forms a large protein conduit and can translocate molecules across both the inner and outer membranes. Interacts with MacA.

The protein resides in the cell inner membrane. Functionally, part of the tripartite efflux system MacAB-TolC. MacB is a non-canonical ABC transporter that contains transmembrane domains (TMD), which form a pore in the inner membrane, and an ATP-binding domain (NBD), which is responsible for energy generation. Confers resistance against macrolides. This is Macrolide export ATP-binding/permease protein MacB from Shigella flexneri.